The sequence spans 890 residues: Nucleoside hydrolase 3 (890 aa).

The signal sequence occupies residues 1–21 (MLTSPTLKSLWFLFTILGLLG). N-linked (GlcNAc...) asparagine glycosylation is found at Asn55, Asn232, Asn371, Asn485, Asn580, Asn655, and Asn740.

The protein belongs to the IUNH family.

Its subcellular location is the secreted. The protein localises to the extracellular space. The protein resides in the apoplast. The enzyme catalyses a purine D-ribonucleoside + H2O = a purine nucleobase + D-ribose. It carries out the reaction inosine + H2O = hypoxanthine + D-ribose. It catalyses the reaction adenosine + H2O = D-ribose + adenine. Extracellular purine-specific hydrolase present in the apoplastic fluid involved in the degradation of extracellular nucleosides, including inosine and adenosine, and which may participate in wound and pathogen responses (e.g. Botrytis cinerea). In Arabidopsis thaliana (Mouse-ear cress), this protein is Nucleoside hydrolase 3.